Reading from the N-terminus, the 192-residue chain is Probable molybdenum cofactor guanylyltransferase (192 aa).

Residues 8 to 10 (LAG), Lys-20, Asp-69, and Asp-94 contribute to the GTP site. Residue Asp-94 participates in Mg(2+) binding.

This sequence belongs to the MobA family. Requires Mg(2+) as cofactor.

Its subcellular location is the cytoplasm. It carries out the reaction Mo-molybdopterin + GTP + H(+) = Mo-molybdopterin guanine dinucleotide + diphosphate. In terms of biological role, transfers a GMP moiety from GTP to Mo-molybdopterin (Mo-MPT) cofactor (Moco or molybdenum cofactor) to form Mo-molybdopterin guanine dinucleotide (Mo-MGD) cofactor. The polypeptide is Probable molybdenum cofactor guanylyltransferase (Pyrococcus horikoshii (strain ATCC 700860 / DSM 12428 / JCM 9974 / NBRC 100139 / OT-3)).